Here is a 603-residue protein sequence, read N- to C-terminus: Methylenetetrahydrofolate reductase 1 (603 aa).

Catalysis depends on glutamate 21, which acts as the Proton donor/acceptor. NAD(+) is bound by residues 21 to 26 and 53 to 54; these read EFFPPK and TW. FAD contacts are provided by residues 53–54, histidine 82, 112–114, 130–131, tyrosine 153, and lysine 173; these read TW, RGD, and YA. Aspartate 114 contacts substrate. Substrate is bound by residues glutamine 184 and tyrosine 276. The residue at position 355 (serine 355) is a Phosphoserine.

Belongs to the methylenetetrahydrofolate reductase family. Requires FAD as cofactor.

It catalyses the reaction (6S)-5-methyl-5,6,7,8-tetrahydrofolate + NADP(+) = (6R)-5,10-methylene-5,6,7,8-tetrahydrofolate + NADPH + H(+). The enzyme catalyses (6S)-5-methyl-5,6,7,8-tetrahydrofolate + NAD(+) = (6R)-5,10-methylene-5,6,7,8-tetrahydrofolate + NADH + H(+). The protein operates within one-carbon metabolism; tetrahydrofolate interconversion. Functionally, major methylenetetrahydrofolate reductase required to generate the methyl groups necessary for methionine synthetase to convert homocysteine to methionine. Performs 80 to 85 percent of the total methylenetetrahydrofolate reductase activity of the cells. The chain is Methylenetetrahydrofolate reductase 1 (met9) from Schizosaccharomyces pombe (strain 972 / ATCC 24843) (Fission yeast).